The primary structure comprises 87 residues: U3-theraphotoxin-Hhn1a 10 (87 aa).

An N-terminal signal peptide occupies residues 1–24; sequence MVNMEASMFLTFAGLVLLFVVCYA. Residues 25–52 constitute a propeptide that is removed on maturation; it reads SESEEKEFPKEMLSSIFAVDNDFKQEER. Intrachain disulfides connect Cys-54–Cys-67, Cys-61–Cys-72, and Cys-66–Cys-79.

It belongs to the neurotoxin 10 (Hwtx-1) family. 51 (Hntx-8) subfamily. Hntx-8 sub-subfamily. As to expression, expressed by the venom gland.

It is found in the secreted. Ion channel inhibitor. The sequence is that of U3-theraphotoxin-Hhn1a 10 from Cyriopagopus hainanus (Chinese bird spider).